We begin with the raw amino-acid sequence, 1100 residues long: Serine/threonine/tyrosine-interacting-like protein 2 (1100 aa).

The span at 1-12 (MASSVEDQQLQQ) shows a compositional bias: polar residues. Residues 1–21 (MASSVEDQQLQQEEAESVKDV) form a disordered region. A Tyrosine-protein phosphatase domain is found at 141-289 (SPVDEVWPNV…LRQLNETLME (149 aa)). The span at 356-374 (CGSQQPNMQQPADQPSLPG) shows a compositional bias: polar residues. 8 disordered regions span residues 356–383 (CGSQ…EDGD), 411–436 (EDED…TSED), 479–504 (AAAR…DDVQ), 542–561 (KENA…APDL), 575–615 (KQQK…ERSR), 667–686 (VLSG…TPAP), 888–1060 (CEKP…DEEI), and 1075–1100 (VAEE…HDHK). The segment covering 418–428 (DKTQRAVRPDD) has biased composition (basic and acidic residues). Residues 580–615 (HGGEENKEEILQMSRGEDTATARRRQRREEVLERSR) are compositionally biased toward basic and acidic residues. Residues 667 to 676 (VLSGRSTRSL) are compositionally biased toward low complexity. Residues 888-898 (CEKPKPKRDYG) show a composition bias toward basic and acidic residues. Polar residues-rich tracts occupy residues 907 to 916 (ASANNPTSSI), 994 to 1013 (SYSS…TSFA), and 1029 to 1041 (FQNH…SSVY). A compositionally biased stretch (basic and acidic residues) spans 1089 to 1100 (RKQEESKSHDHK).

Belongs to the protein-tyrosine phosphatase family. Non-receptor class dual specificity subfamily. In terms of tissue distribution, expressed in muscle fibers in a regular striated pattern (at protein level).

The protein localises to the cytoplasm. It localises to the myofibril. It is found in the sarcomere. Required for myofiber maturation. This Danio rerio (Zebrafish) protein is Serine/threonine/tyrosine-interacting-like protein 2 (styxl2).